Here is a 272-residue protein sequence, read N- to C-terminus: MYVWVQQPTALLLLALTLGVTARRLNCVKHTYPSGHKCCRECQPGHGMVSRCDHTRDTLCHPCETGFYNEAVNYDTCKQCTQCNHRSGSELKQNCTPTQDTVCRCRPGTQPRQDSGYKLGVDCVPCPPGHFSPGNNQACKPWTNCTLSGKQTRHPASDSLDAVCEDRSLLATLLWETQRPTFRPTTVQSTTVWPRTSELPSPPTLVTPEGPAFAVLLGLGLGLLAPLTVLLALYLLRKAWRLPNTPKPCWGNSFRTPIQEEHTDAHFTLAKI.

Residues 1–19 form the signal peptide; sequence MYVWVQQPTALLLLALTLG. The Extracellular portion of the chain corresponds to 20-211; that stretch reads VTARRLNCVK…PPTLVTPEGP (192 aa). TNFR-Cys repeat units follow at residues 26–61 and 62–103; these read NCVK…TLCH and PCET…DTVC. 8 disulfide bridges follow: cysteine 27–cysteine 38, cysteine 39–cysteine 52, cysteine 42–cysteine 60, cysteine 63–cysteine 77, cysteine 80–cysteine 95, cysteine 83–cysteine 103, cysteine 105–cysteine 123, and cysteine 126–cysteine 139. One copy of the TNFR-Cys 3; truncated repeat lies at 104–124; that stretch reads RCRPGTQPRQDSGYKLGVDCV. The stretch at 125–165 is one TNFR-Cys 4 repeat; it reads PCPPGHFSPGNNQACKPWTNCTLSGKQTRHPASDSLDAVCE. N-linked (GlcNAc...) asparagine glycosylation is present at asparagine 144. Cysteine 145 and cysteine 164 are disulfide-bonded. Residues 212 to 236 traverse the membrane as a helical segment; sequence AFAVLLGLGLGLLAPLTVLLALYLL. Residues 237–272 lie on the Cytoplasmic side of the membrane; it reads RKAWRLPNTPKPCWGNSFRTPIQEEHTDAHFTLAKI.

In terms of assembly, interacts with TRAF2, TRAF3 and TRAF5. As to expression, expressed in CD4(+) T-cells and in T-helper Th17 cells (at protein level).

The protein localises to the membrane. In terms of biological role, receptor for TNFSF4/OX40L/GP34. Is a costimulatory molecule implicated in long-term T-cell immunity. The polypeptide is Tumor necrosis factor receptor superfamily member 4 (Tnfrsf4) (Mus musculus (Mouse)).